Consider the following 60-residue polypeptide: Large ribosomal subunit protein bL32 (60 aa).

Over residues 1–23 the composition is skewed to basic residues; it reads MAKHPVPKKKTSKARRDARRSHH. The segment at 1–28 is disordered; the sequence is MAKHPVPKKKTSKARRDARRSHHALTPP.

Belongs to the bacterial ribosomal protein bL32 family. As to quaternary structure, part of the 50S ribosomal subunit.

Functionally, found on the solvent side of the large subunit. This chain is Large ribosomal subunit protein bL32 (rpmF), found in Thermus thermophilus (strain ATCC BAA-163 / DSM 7039 / HB27).